The chain runs to 237 residues: MQKQEMLYKGKAKSVYETEDNDLLILHFRDDTSALDGKRIEQLARKGVVNNRFNAFIMQKLADAGIETHFEKQLSDDEVLVKRLDMIPVECVVRNFAAGSLVRRLGLEEGQALTPPTYELFYKDDALGDPMVNESISISLGWATDAQLAKMKELSHQVNEVLTALFDAGDLILVDFKLEFGVFHDRIILGDEFSPDGCRIWDKATKKKLDKDRFRQSLGDVIEAYEEVASRIGVPLS.

Belongs to the SAICAR synthetase family.

It carries out the reaction 5-amino-1-(5-phospho-D-ribosyl)imidazole-4-carboxylate + L-aspartate + ATP = (2S)-2-[5-amino-1-(5-phospho-beta-D-ribosyl)imidazole-4-carboxamido]succinate + ADP + phosphate + 2 H(+). Its pathway is purine metabolism; IMP biosynthesis via de novo pathway; 5-amino-1-(5-phospho-D-ribosyl)imidazole-4-carboxamide from 5-amino-1-(5-phospho-D-ribosyl)imidazole-4-carboxylate: step 1/2. In Psychrobacter arcticus (strain DSM 17307 / VKM B-2377 / 273-4), this protein is Phosphoribosylaminoimidazole-succinocarboxamide synthase.